The sequence spans 269 residues: Formamidopyrimidine-DNA glycosylase (269 aa).

The active-site Schiff-base intermediate with DNA is Pro-2. Glu-3 functions as the Proton donor in the catalytic mechanism. The Proton donor; for beta-elimination activity role is filled by Lys-57. DNA contacts are provided by His-90, Arg-109, and Arg-150. The segment at 235–269 (QVYGKAGEQCPNCAELIQELKIGQRNTFYCSSCQV) adopts an FPG-type zinc-finger fold. The Proton donor; for delta-elimination activity role is filled by Arg-259.

It belongs to the FPG family. In terms of assembly, monomer. It depends on Zn(2+) as a cofactor.

The enzyme catalyses Hydrolysis of DNA containing ring-opened 7-methylguanine residues, releasing 2,6-diamino-4-hydroxy-5-(N-methyl)formamidopyrimidine.. The catalysed reaction is 2'-deoxyribonucleotide-(2'-deoxyribose 5'-phosphate)-2'-deoxyribonucleotide-DNA = a 3'-end 2'-deoxyribonucleotide-(2,3-dehydro-2,3-deoxyribose 5'-phosphate)-DNA + a 5'-end 5'-phospho-2'-deoxyribonucleoside-DNA + H(+). In terms of biological role, involved in base excision repair of DNA damaged by oxidation or by mutagenic agents. Acts as a DNA glycosylase that recognizes and removes damaged bases. Has a preference for oxidized purines, such as 7,8-dihydro-8-oxoguanine (8-oxoG). Has AP (apurinic/apyrimidinic) lyase activity and introduces nicks in the DNA strand. Cleaves the DNA backbone by beta-delta elimination to generate a single-strand break at the site of the removed base with both 3'- and 5'-phosphates. This chain is Formamidopyrimidine-DNA glycosylase, found in Vibrio atlanticus (strain LGP32) (Vibrio splendidus (strain Mel32)).